We begin with the raw amino-acid sequence, 369 residues long: Terpene cyclase DEP1 (369 aa).

The next 8 helical transmembrane spans lie at 9 to 29 (FFYL…FNGM), 82 to 102 (LLFF…LIES), 118 to 138 (AMVL…LYLV), 157 to 177 (ALLV…VPAW), 190 to 210 (IALF…LASI), 234 to 254 (LVLA…GALI), 298 to 318 (LFSQ…SHLL), and 342 to 362 (LVYL…SFAL).

Belongs to the membrane-bound ascI terpene cyclase family.

It is found in the membrane. Its pathway is polyketide biosynthesis. In terms of biological role, part of the gene cluster that mediates the biosynthesis of depudecin, a highly oxidized eleven-carbon linear polyketide that acts as a histone deacetylase (HDAC) inhibitor and makes a small contribution to pathogenesis. The reducing polyketide synthase DEP5 is the central enzyme in depudecin biosynthesis by yielding the backbone polyketide chain. The monooxygenases DEP2 and DEP4, as well as the uncharacterized protein DEP1, then act as tailoring enzymes to modify the intermediate polyketide chain into depudecin. In Alternaria brassicicola (Dark leaf spot agent), this protein is Terpene cyclase DEP1.